Reading from the N-terminus, the 238-residue chain is 3-deoxy-manno-octulosonate cytidylyltransferase (238 aa).

It belongs to the KdsB family.

The protein resides in the cytoplasm. It catalyses the reaction 3-deoxy-alpha-D-manno-oct-2-ulosonate + CTP = CMP-3-deoxy-beta-D-manno-octulosonate + diphosphate. Its pathway is nucleotide-sugar biosynthesis; CMP-3-deoxy-D-manno-octulosonate biosynthesis; CMP-3-deoxy-D-manno-octulosonate from 3-deoxy-D-manno-octulosonate and CTP: step 1/1. The protein operates within bacterial outer membrane biogenesis; lipopolysaccharide biosynthesis. Functionally, activates KDO (a required 8-carbon sugar) for incorporation into bacterial lipopolysaccharide in Gram-negative bacteria. The protein is 3-deoxy-manno-octulosonate cytidylyltransferase of Nitratiruptor sp. (strain SB155-2).